The sequence spans 351 residues: Fe(3+) ions import ATP-binding protein FbpC (351 aa).

One can recognise an ABC transporter domain in the interval 9 to 239 (LVLKNINKTF…PNSLFLANFM (231 aa)). 41-48 (GPSGCGKT) is a binding site for ATP.

It belongs to the ABC transporter superfamily. Fe(3+) ion importer (TC 3.A.1.10) family. The complex is composed of two ATP-binding proteins (FbpC), two transmembrane proteins (FbpB) and a solute-binding protein (FbpA).

Its subcellular location is the cell inner membrane. It carries out the reaction Fe(3+)(out) + ATP + H2O = Fe(3+)(in) + ADP + phosphate + H(+). Part of the ABC transporter complex FbpABC involved in Fe(3+) ions import. Responsible for energy coupling to the transport system. The polypeptide is Fe(3+) ions import ATP-binding protein FbpC (Mannheimia succiniciproducens (strain KCTC 0769BP / MBEL55E)).